Consider the following 112-residue polypeptide: Small ribosomal subunit protein bS6 (112 aa).

It belongs to the bacterial ribosomal protein bS6 family.

Its function is as follows. Binds together with bS18 to 16S ribosomal RNA. The sequence is that of Small ribosomal subunit protein bS6 from Christiangramia forsetii (strain DSM 17595 / CGMCC 1.15422 / KT0803) (Gramella forsetii).